The sequence spans 125 residues: uncharacterized protein (125 aa).

The chain crosses the membrane as a helical span at residues 21-43 (KFSLIALVSFTALAIIVLYHNIS).

It is found in the membrane. This is an uncharacterized protein from Archaeoglobus fulgidus (strain ATCC 49558 / DSM 4304 / JCM 9628 / NBRC 100126 / VC-16).